The following is a 179-amino-acid chain: Large ribosomal subunit protein uL5 (179 aa).

Belongs to the universal ribosomal protein uL5 family. As to quaternary structure, part of the 50S ribosomal subunit; part of the 5S rRNA/L5/L18/L25 subcomplex. Contacts the 5S rRNA and the P site tRNA. Forms a bridge to the 30S subunit in the 70S ribosome.

Functionally, this is one of the proteins that bind and probably mediate the attachment of the 5S RNA into the large ribosomal subunit, where it forms part of the central protuberance. In the 70S ribosome it contacts protein S13 of the 30S subunit (bridge B1b), connecting the 2 subunits; this bridge is implicated in subunit movement. Contacts the P site tRNA; the 5S rRNA and some of its associated proteins might help stabilize positioning of ribosome-bound tRNAs. In Pseudoalteromonas translucida (strain TAC 125), this protein is Large ribosomal subunit protein uL5.